The following is a 114-amino-acid chain: Large ribosomal subunit protein uL18 (114 aa).

It belongs to the universal ribosomal protein uL18 family. In terms of assembly, part of the 50S ribosomal subunit; part of the 5S rRNA/L5/L18/L25 subcomplex. Contacts the 5S and 23S rRNAs.

This is one of the proteins that bind and probably mediate the attachment of the 5S RNA into the large ribosomal subunit, where it forms part of the central protuberance. The chain is Large ribosomal subunit protein uL18 from Aster yellows phytoplasma.